The primary structure comprises 108 residues: uncharacterized protein (108 aa).

The disordered stretch occupies residues 81 to 108; that stretch reads TNHHQQQQNHQNQQQQQQQPNGIFENNI. The segment covering 83-99 has biased composition (low complexity); it reads HHQQQQNHQNQQQQQQQ.

This is an uncharacterized protein from Dictyostelium discoideum (Social amoeba).